The following is a 507-amino-acid chain: ATP synthase subunit alpha, chloroplastic (507 aa).

170 to 177 (GDRQTGKT) provides a ligand contact to ATP. The residue at position 257 (threonine 257) is a Phosphothreonine.

It belongs to the ATPase alpha/beta chains family. F-type ATPases have 2 components, CF(1) - the catalytic core - and CF(0) - the membrane proton channel. CF(1) has five subunits: alpha(3), beta(3), gamma(1), delta(1), epsilon(1). CF(0) has four main subunits: a, b, b' and c.

It is found in the plastid. It localises to the chloroplast thylakoid membrane. The catalysed reaction is ATP + H2O + 4 H(+)(in) = ADP + phosphate + 5 H(+)(out). Functionally, produces ATP from ADP in the presence of a proton gradient across the membrane. The alpha chain is a regulatory subunit. The polypeptide is ATP synthase subunit alpha, chloroplastic (Capsella bursa-pastoris (Shepherd's purse)).